The following is a 374-amino-acid chain: D-amino-acid oxidase 3 (374 aa).

A signal peptide spans 1-19 (MVKYDAIILGSGVLGLSIA). 7 residues coordinate FAD: serine 11, leucine 14, lysine 34, aspartate 35, alanine 46, serine 47, and glycine 51. N-linked (GlcNAc...) asparagine glycosylation is present at asparagine 180. Cysteine 214 and cysteine 271 form a disulfide bridge. Residues tyrosine 229, tyrosine 246, and arginine 296 each coordinate (R)-lactate. The anthranilate site is built by tyrosine 229, tyrosine 246, and arginine 296. Positions 296, 342, 345, 346, and 347 each coordinate FAD. A Microbody targeting signal motif is present at residues 372–374 (AKL).

The protein belongs to the DAMOX/DASOX family. The cofactor is FAD.

The protein localises to the peroxisome matrix. It catalyses the reaction a D-alpha-amino acid + O2 + H2O = a 2-oxocarboxylate + H2O2 + NH4(+). In terms of biological role, catalyzes the oxidative deamination of D-amino acids with broad substrate specificity. Enables the organism to utilize D-amino acids as a source of nutrients. Enables the organism to utilize D-asparate and D-glutamate as a nitrogen source and may also contribute to utlization of D-tryptophan, D-tyrosine and D-asparagine as a nitrogen source. Protects the organism from the toxicity of D-amino acids, including from D-glutamate. May play a role in its interaction with the host. This is D-amino-acid oxidase 3 from Cryptococcus deuterogattii (strain R265) (Cryptococcus gattii VGII (strain R265)).